The chain runs to 353 residues: D-glycerol 3-phosphate phosphatase (353 aa).

D14 (nucleophile) is an active-site residue. The Mg(2+) site is built by D14, D16, and D209. D16 (proton donor) is an active-site residue.

The protein belongs to the HAD-like hydrolase superfamily. In terms of assembly, homodimer. Mg(2+) is required as a cofactor. Co(2+) serves as cofactor. It depends on Mn(2+) as a cofactor.

It carries out the reaction sn-glycerol 1-phosphate + H2O = glycerol + phosphate. It functions in the pathway glycerolipid metabolism. Its function is as follows. Dephosphorylates D-glycerol 3-phosphate (sn-glycerol 1-phosphate). Is the final enzyme involved in the recycling/catabolism of glycerophospholipid polar heads. To a lesser extent, is also able to act on glycerol 2-phosphate and D-ribulose 5-phosphate, but cannot use D-glyceraldehyde 3-phosphate, dihydroxyacetone-phosphate, UMP or GMP as substrates. The protein is D-glycerol 3-phosphate phosphatase of Mycobacterium tuberculosis (strain ATCC 25618 / H37Rv).